Reading from the N-terminus, the 296-residue chain is tRNA uridine(34) hydroxylase (296 aa).

In terms of domain architecture, Rhodanese spans Ala121–Ser215. The active-site Cysteine persulfide intermediate is the Cys175.

It belongs to the TrhO family.

It catalyses the reaction uridine(34) in tRNA + AH2 + O2 = 5-hydroxyuridine(34) in tRNA + A + H2O. Catalyzes oxygen-dependent 5-hydroxyuridine (ho5U) modification at position 34 in tRNAs. In Roseobacter denitrificans (strain ATCC 33942 / OCh 114) (Erythrobacter sp. (strain OCh 114)), this protein is tRNA uridine(34) hydroxylase.